The primary structure comprises 276 residues: Ribosomal RNA small subunit methyltransferase A (276 aa).

S-adenosyl-L-methionine contacts are provided by Asn-27, Leu-29, Gly-54, Glu-75, Asp-101, and Asn-122.

Belongs to the class I-like SAM-binding methyltransferase superfamily. rRNA adenine N(6)-methyltransferase family. RsmA subfamily.

It localises to the cytoplasm. It catalyses the reaction adenosine(1518)/adenosine(1519) in 16S rRNA + 4 S-adenosyl-L-methionine = N(6)-dimethyladenosine(1518)/N(6)-dimethyladenosine(1519) in 16S rRNA + 4 S-adenosyl-L-homocysteine + 4 H(+). Specifically dimethylates two adjacent adenosines (A1518 and A1519) in the loop of a conserved hairpin near the 3'-end of 16S rRNA in the 30S particle. May play a critical role in biogenesis of 30S subunits. The sequence is that of Ribosomal RNA small subunit methyltransferase A from Brucella suis (strain ATCC 23445 / NCTC 10510).